Here is a 295-residue protein sequence, read N- to C-terminus: Glycine--tRNA ligase alpha subunit (295 aa).

This sequence belongs to the class-II aminoacyl-tRNA synthetase family. In terms of assembly, tetramer of two alpha and two beta subunits.

The protein resides in the cytoplasm. The catalysed reaction is tRNA(Gly) + glycine + ATP = glycyl-tRNA(Gly) + AMP + diphosphate. This Desulforamulus reducens (strain ATCC BAA-1160 / DSM 100696 / MI-1) (Desulfotomaculum reducens) protein is Glycine--tRNA ligase alpha subunit.